A 38-amino-acid chain; its full sequence is Photosystem II reaction center protein L (38 aa).

A helical membrane pass occupies residues Ser-17 to Phe-37.

The protein belongs to the PsbL family. PSII is composed of 1 copy each of membrane proteins PsbA, PsbB, PsbC, PsbD, PsbE, PsbF, PsbH, PsbI, PsbJ, PsbK, PsbL, PsbM, PsbT, PsbY, PsbZ, Psb30/Ycf12, at least 3 peripheral proteins of the oxygen-evolving complex and a large number of cofactors. It forms dimeric complexes.

It is found in the plastid. It localises to the chloroplast thylakoid membrane. One of the components of the core complex of photosystem II (PSII). PSII is a light-driven water:plastoquinone oxidoreductase that uses light energy to abstract electrons from H(2)O, generating O(2) and a proton gradient subsequently used for ATP formation. It consists of a core antenna complex that captures photons, and an electron transfer chain that converts photonic excitation into a charge separation. This subunit is found at the monomer-monomer interface and is required for correct PSII assembly and/or dimerization. In Euglena gracilis, this protein is Photosystem II reaction center protein L.